We begin with the raw amino-acid sequence, 122 residues long: Small ribosomal subunit protein bS6 (122 aa).

The protein belongs to the bacterial ribosomal protein bS6 family.

Functionally, binds together with bS18 to 16S ribosomal RNA. This chain is Small ribosomal subunit protein bS6 (rpsF), found in Neisseria meningitidis serogroup B (strain ATCC BAA-335 / MC58).